A 173-amino-acid polypeptide reads, in one-letter code: Regulator of ribonuclease activity A (173 aa).

It belongs to the RraA family. Homotrimer. Binds to both RNA-binding sites in the C-terminal region of Rne and to RhlB.

It localises to the cytoplasm. In terms of biological role, globally modulates RNA abundance by binding to RNase E (Rne) and regulating its endonucleolytic activity. Can modulate Rne action in a substrate-dependent manner by altering the composition of the degradosome. Modulates RNA-binding and helicase activities of the degradosome. This chain is Regulator of ribonuclease activity A, found in Vibrio vulnificus (strain YJ016).